The chain runs to 508 residues: Maturase K (508 aa).

The protein belongs to the intron maturase 2 family. MatK subfamily.

Its subcellular location is the plastid. It localises to the chloroplast. Functionally, usually encoded in the trnK tRNA gene intron. Probably assists in splicing its own and other chloroplast group II introns. This is Maturase K from Ranunculus lingua (Greater spearwort).